The chain runs to 196 residues: Pyridoxal 5'-phosphate synthase subunit PdxT (196 aa).

52 to 54 (GES) contributes to the L-glutamine binding site. C84 acts as the Nucleophile in catalysis. L-glutamine-binding positions include R113 and 141 to 142 (IR). Active-site charge relay system residues include H178 and E180.

It belongs to the glutaminase PdxT/SNO family. In terms of assembly, in the presence of PdxS, forms a dodecamer of heterodimers. Only shows activity in the heterodimer.

The catalysed reaction is aldehydo-D-ribose 5-phosphate + D-glyceraldehyde 3-phosphate + L-glutamine = pyridoxal 5'-phosphate + L-glutamate + phosphate + 3 H2O + H(+). It carries out the reaction L-glutamine + H2O = L-glutamate + NH4(+). It functions in the pathway cofactor biosynthesis; pyridoxal 5'-phosphate biosynthesis. In terms of biological role, catalyzes the hydrolysis of glutamine to glutamate and ammonia as part of the biosynthesis of pyridoxal 5'-phosphate. The resulting ammonia molecule is channeled to the active site of PdxS. The sequence is that of Pyridoxal 5'-phosphate synthase subunit PdxT from Pyrococcus abyssi (strain GE5 / Orsay).